The sequence spans 145 residues: Endosomal/vacuolar adapter protein YPT35 (145 aa).

A PX domain is found at Ile32–Gly145.

Belongs to the YPT35 family.

The protein localises to the endosome membrane. It localises to the vacuole membrane. Its function is as follows. Recruits the lipid transfer protein VPS13 to endosomal and vacuolar membranes. This chain is Endosomal/vacuolar adapter protein YPT35 (YPT35), found in Meyerozyma guilliermondii (strain ATCC 6260 / CBS 566 / DSM 6381 / JCM 1539 / NBRC 10279 / NRRL Y-324) (Yeast).